The sequence spans 635 residues: Probable monoacyl phosphatidylinositol tetramannoside-binding protein LpqW (635 aa).

The first 26 residues, 1–26 (MGVPSPVRRVCVTVGALVALACMVLA), serve as a signal peptide directing secretion. Disordered stretches follow at residues 32–52 (PPPA…PRRP), 389–412 (NTSV…GPPE), and 511–551 (NAPT…LVKA). Composition is skewed to low complexity over residues 390-411 (TSVS…TGPP) and 511-531 (NAPT…APDT).

Belongs to the bacterial solute-binding protein 5 family.

Its pathway is phospholipid metabolism; phosphatidylinositol metabolism. In terms of biological role, may directly or indirectly regulate the accessibility of the key branch point intermediate, monoacyl phosphatidylinositol tetramannoside (AcPIM4), to the elongating alpha-1,6 mannosyltransferases which could regulate the lipoarabinomannans (LAMs) biosynthesis. The chain is Probable monoacyl phosphatidylinositol tetramannoside-binding protein LpqW (lpqW) from Mycobacterium tuberculosis (strain CDC 1551 / Oshkosh).